The sequence spans 459 residues: ATP synthase subunit beta (459 aa).

Position 148 to 155 (148 to 155) interacts with ATP; the sequence is GGAGVGKT.

This sequence belongs to the ATPase alpha/beta chains family. In terms of assembly, F-type ATPases have 2 components, CF(1) - the catalytic core - and CF(0) - the membrane proton channel. CF(1) has five subunits: alpha(3), beta(3), gamma(1), delta(1), epsilon(1). CF(0) has three main subunits: a(1), b(2) and c(9-12). The alpha and beta chains form an alternating ring which encloses part of the gamma chain. CF(1) is attached to CF(0) by a central stalk formed by the gamma and epsilon chains, while a peripheral stalk is formed by the delta and b chains.

It is found in the cell inner membrane. It catalyses the reaction ATP + H2O + 4 H(+)(in) = ADP + phosphate + 5 H(+)(out). Functionally, produces ATP from ADP in the presence of a proton gradient across the membrane. The catalytic sites are hosted primarily by the beta subunits. This chain is ATP synthase subunit beta, found in Thioalkalivibrio sulfidiphilus (strain HL-EbGR7).